A 518-amino-acid chain; its full sequence is Zinc finger protein 776 (518 aa).

In terms of domain architecture, KRAB spans 14-89; it reads VTFEDVAVNF…HWTGVCTKKV (76 aa). Glycyl lysine isopeptide (Lys-Gly) (interchain with G-Cter in SUMO2) cross-links involve residues Lys-171, Lys-196, Lys-220, and Lys-247. The C2H2-type 1; degenerate zinc finger occupies 208-230; that stretch reads YICGESTIPFSNKHSLVLHQRLL. Residues 236 to 258 form a C2H2-type 2; degenerate zinc finger; that stretch reads YVCSDSGKFTSKSNSFNNHQGVR. 7 consecutive C2H2-type zinc fingers follow at residues 264 to 286, 292 to 314, 320 to 342, 348 to 370, 376 to 398, 404 to 426, and 432 to 454; these read YQCG…QRVH, YECG…QRVH, YECD…QRVH, FECT…QRVH, YECK…QRVH, and YECR…QQIH. The C2H2-type 10; degenerate zinc-finger motif lies at 460–482; that stretch reads HECGECGKCFHQKGSLIRHQQIH. The C2H2-type 11 zinc finger occupies 488–510; the sequence is HECGECGKCFRQKGNLIKHQRVH.

This sequence belongs to the krueppel C2H2-type zinc-finger protein family.

The protein resides in the nucleus. In terms of biological role, may be involved in transcriptional regulation. The chain is Zinc finger protein 776 (ZNF776) from Homo sapiens (Human).